We begin with the raw amino-acid sequence, 367 residues long: MAMPRVLCRVRLLIHNDFSVISKYSPVVNSVLINKCARFRHSIRHFRTNFPAGLVLNTSQKQDASSSSSDSDSSDSDEDDVTIEYHRGLPQITVPLPSRKERCRFTLKPISNTVGDFLEMLKKEDRGIDRVVCKTIDGTRIASSTTIETLLQDDFKLLINDNAYNVDSPKQERLTTEEVQGLSDVKTLVNQLYEALNVREHQLQKEVELTTQLETLQQELLPLEEKKLELEQVANRRSNWMAWAGLGLMSVQFGILARLTWWEYSWDIMEPVTYFVTYGTAMAAYAYFVLTREEYILNDVRDRQQLLLLHKKAKKTGFDVNQYNVLKDQIAKLELDLKRLRDPLKLRLPPKAAAKEEKKQVEEKAKE.

Residues 1 to 12 (MAMPRVLCRVRL) constitute a mitochondrion transit peptide. Residues 13–232 (LIHNDFSVIS…LEEKKLELEQ (220 aa)) lie on the Mitochondrial matrix side of the membrane. Residues 61–80 (KQDASSSSSDSDSSDSDEDD) form a disordered region. A coiled-coil region spans residues 199–233 (REHQLQKEVELTTQLETLQQELLPLEEKKLELEQV). A helical transmembrane segment spans residues 233–253 (VANRRSNWMAWAGLGLMSVQF). Over 254-262 (GILARLTWW) the chain is Mitochondrial intermembrane. Residues 263–284 (EYSWDIMEPVTYFVTYGTAMAA) form a helical membrane-spanning segment. A Selectivity filter motif is present at residues 266–276 (WDIMEPVTYFV). Glutamate 270 serves as a coordination point for Ca(2+). The Mitochondrial matrix segment spans residues 285 to 367 (YAYFVLTREE…KKQVEEKAKE (83 aa)).

It belongs to the MCU (TC 1.A.77) family. As to quaternary structure, homotetramer. Component of the uniplex complex, composed of MCU, EMRE, MICU1 and MICU2 in a 4:4:1:1 stoichiometry.

Its subcellular location is the mitochondrion inner membrane. The enzyme catalyses Ca(2+)(in) = Ca(2+)(out). With respect to regulation, MCU channel activity is regulated by the heterodimer composed of MICU1 and MICU2, which act as calcium-sensors. At low calcium levels, MICU1 occludes the pore of the MCU channel, preventing mitochondrial calcium uptake. At higher calcium levels, calcium-binding to MICU1 and MICU2 induces a conformational change that weakens MCU-MICU1 interactions and moves the MICU1-MICU2 heterodimer away from the pore, allowing calcium permeation through the channel. Its function is as follows. Channel-forming and calcium-conducting subunit of the mitochondrial inner membrane calcium uniporter complex (uniplex), which mediates calcium uptake into the mitochondrial matrix. MCU channel activity is regulated by the calcium-sensor subunits of the uniplex MICU1 and MICU2. Mitochondrial calcium homeostasis plays key roles in cellular physiology and regulates ATP production, cytoplasmic calcium signals and activation of cell death pathways. This Tribolium castaneum (Red flour beetle) protein is Calcium uniporter protein, mitochondrial.